The following is a 1016-amino-acid chain: DNA polymerase I (1016 aa).

Residues 1–308 (MPNSIWTSSD…MEFTTLTRRV (308 aa)) form the 5'-3' exonuclease domain. A disordered region spans residues 334–361 (GPDLDAAEPEPVAGGIPEVSGESVPMPP). The 237-residue stretch at 394–630 (SAYVTIRDLV…MEARGITVDR (237 aa)) folds into the 3'-5' exonuclease domain. The interval 768 to 1016 (GRKIRTAFIS…RAATNWDEAH (249 aa)) is polymerase.

It belongs to the DNA polymerase type-A family. Single-chain monomer with multiple functions.

It catalyses the reaction DNA(n) + a 2'-deoxyribonucleoside 5'-triphosphate = DNA(n+1) + diphosphate. Functionally, in addition to polymerase activity, this DNA polymerase exhibits 3'-5' and 5'-3' exonuclease activity. In Rhizobium leguminosarum, this protein is DNA polymerase I (polA).